A 261-amino-acid chain; its full sequence is uncharacterized protein (261 aa).

A disordered region spans residues 1 to 22; the sequence is MGVADNEYISVPTGEPVQQQPQ. 3 consecutive transmembrane segments (helical) span residues 92–112, 122–142, and 147–167; these read IIILFFSQQFLLFSIAPILGL, IVVMHFLTAAFYYIFSVIFLF, and INTILLSILFSIIFTLSLMNY.

The protein localises to the membrane. This is an uncharacterized protein from Dictyostelium discoideum (Social amoeba).